The primary structure comprises 333 residues: D-alanine--D-alanine ligase (333 aa).

Positions 124–329 constitute an ATP-grasp domain; the sequence is KMWFSALGIR…FAQYLSGNIM (206 aa). Residue 154–209 participates in ATP binding; sequence ALEKWGSIFIKAASQGSSVGCYRVDNKEQLANSLEEAFKYSPYVVVEKTINARELE. Residues Asp283, Glu296, and Asn298 each coordinate Mg(2+).

The protein belongs to the D-alanine--D-alanine ligase family. Requires Mg(2+) as cofactor. It depends on Mn(2+) as a cofactor.

The protein localises to the cytoplasm. It catalyses the reaction 2 D-alanine + ATP = D-alanyl-D-alanine + ADP + phosphate + H(+). It participates in cell wall biogenesis; peptidoglycan biosynthesis. Its function is as follows. Cell wall formation. The protein is D-alanine--D-alanine ligase of Shewanella halifaxensis (strain HAW-EB4).